A 651-amino-acid chain; its full sequence is E3 SUMO-protein ligase PIAS1 (651 aa).

A2 bears the N-acetylalanine mark. The interval 2 to 200 (ADSAELKQMV…KCDFTVQVQL (199 aa)) is required for interaction with MSX1. The region spanning 11 to 45 (VMSLRVSELQVLLGYAGRNKHGRKHELLTKALHLL) is the SAP domain. The LXXLL motif motif lies at 19 to 23 (LQVLL). Residues K40 and K46 each participate in a glycyl lysine isopeptide (Lys-Gly) (interchain with G-Cter in SUMO2) cross-link. Residues 56–64 (KIKELYRRR) carry the Nuclear localization signal motif. In terms of domain architecture, PINIT spans 124 to 288 (HLTSALHPVH…SMAVYLVKQL (165 aa)). Residues K137 and K238 each participate in a glycyl lysine isopeptide (Lys-Gly) (interchain with G-Cter in SUMO2) cross-link. Residues 320–405 (PDSEIATTSL…LKYCTDCDEI (86 aa)) form an SP-RING-type zinc finger. Zn(2+) is bound by residues C351, H353, C374, and C377. The Nuclear localization signal signature appears at 368–380 (KKPTWVCPVCDKK). A Glycyl lysine isopeptide (Lys-Gly) (interchain with G-Cter in SUMO2) cross-link involves residue K453. Residues 462 to 473 (LTIDSSSDEEEE) are SUMO1-binding. The disordered stretch occupies residues 465-511 (DSSSDEEEEEPPAKRTCPSLSPTSPLSNKGILSLPHQASPVSRTPSL). 4 positions are modified to phosphoserine: S467, S468, S483, and S485. The segment covering 482 to 491 (PSLSPTSPLS) has biased composition (low complexity). T487 bears the Phosphothreonine mark. 2 positions are modified to phosphoserine: S488 and S491. Residue K493 forms a Glycyl lysine isopeptide (Lys-Gly) (interchain with G-Cter in SUMO2) linkage. S503, S510, and S522 each carry phosphoserine. 2 repeat units span residues 520–523 (NTSL) and 557–560 (NTSL). The interval 520-615 (NTSLIQDYRH…GSSSGSNSSL (96 aa)) is 4 X 4 AA repeats of N-T-S-L. One copy of the 3; approximate repeat lies at 598–601 (STSL). The disordered stretch occupies residues 600–630 (SLPATNGSSSGSNSSLVSSNSLRESHGHGVA). Low complexity predominate over residues 605 to 621 (NGSSSGSNSSLVSSNSL). A 4; approximate repeat occupies 612-615 (NSSL).

It belongs to the PIAS family. In terms of assembly, interacts with NR2C1; the interaction promotes its sumoylation. Interacts with DDX21, CSRP2, AXIN1, JUN, SATB2, PLAG1, TP53 and STAT1 (dimer), following IFNA1-stimulation. Interacts with SP3 (preferentially when SUMO-modified). Interacts with KLF8; the interaction results in SUMO ligation and repression of KLF8 transcriptional activity and of its cell cycle progression into G(1) phase. Interacts with CHUK/IKKA; this interaction induces PIAS1 phosphorylation. Interacts with PTK2/FAK1; the interaction promotes its sumoylation. Interacts with SUMO1, UBE2I, NCOA2 and AR. Interacts with NR2C1; the interaction promotes its sumoylation. Interacts with DDX5. Interacts with MTA1. Interacts with PML (isoform PML-12). Interacts with PRDM1. Interacts (via N-terminus) with MSX1 (via C-terminus); the interaction is required for the localization of both proteins to the nuclear periphery and specific binding of MSX1 to the core enhancer region in target gene promoters. Post-translationally, sumoylated. As to expression, expressed in kidney, heart, spleen, brain and cerebellum; weak expression, if any, in liver and lung.

The protein resides in the nucleus. The protein localises to the nucleus speckle. It localises to the PML body. It is found in the cytoplasm. Its subcellular location is the cytoskeleton. It carries out the reaction S-ubiquitinyl-[E2 ubiquitin-conjugating enzyme]-L-cysteine + [acceptor protein]-L-lysine = [E2 ubiquitin-conjugating enzyme]-L-cysteine + N(6)-ubiquitinyl-[acceptor protein]-L-lysine.. It participates in protein modification; protein sumoylation. Its function is as follows. Functions as an E3-type small ubiquitin-like modifier (SUMO) ligase, stabilizing the interaction between UBE2I and the substrate, and as a SUMO-tethering factor. Catalyzes sumoylation of various proteins, such as CEBPB, MRE11, MTA1, PTK2 and PML. Plays a crucial role as a transcriptional coregulation in various cellular pathways, including the STAT pathway, the p53 pathway and the steroid hormone signaling pathway. In vitro, binds A/T-rich DNA. The effects of this transcriptional coregulation, transactivation or silencing, may vary depending upon the biological context. Mediates sumoylation of MRE11, stabilizing MRE11 on chromatin during end resection. Sumoylates PML (at 'Lys-65' and 'Lys-160') and PML-RAR and promotes their ubiquitin-mediated degradation. PIAS1-mediated sumoylation of PML promotes its interaction with CSNK2A1/CK2 which in turn promotes PML phosphorylation and degradation. Enhances the sumoylation of MTA1 and may participate in its paralog-selective sumoylation. Plays a dynamic role in adipogenesis by promoting the SUMOylation and degradation of CEBPB. Mediates the nuclear mobility and localization of MSX1 to the nuclear periphery, whereby MSX1 is brought into the proximity of target myoblast differentiation factor genes. Also required for the binding of MSX1 to the core enhancer region in target gene promoter regions, independent of its sumoylation activity. Capable of binding to the core enhancer region TAAT box in the MYOD1 gene promoter. The sequence is that of E3 SUMO-protein ligase PIAS1 (Pias1) from Mus musculus (Mouse).